We begin with the raw amino-acid sequence, 151 residues long: Putative truncated GMC-type inactive oxidoreductase L893 (151 aa).

The protein belongs to the GMC oxidoreductase family.

It is found in the virion. This is Putative truncated GMC-type inactive oxidoreductase L893 from Acanthamoeba polyphaga (Amoeba).